The following is a 249-amino-acid chain: Probable transcriptional regulatory protein Meso_3192 (249 aa).

It belongs to the TACO1 family.

It is found in the cytoplasm. The polypeptide is Probable transcriptional regulatory protein Meso_3192 (Chelativorans sp. (strain BNC1)).